We begin with the raw amino-acid sequence, 285 residues long: Inositol oxygenase (285 aa).

Arg29 contributes to the substrate binding site. Ser33 carries the phosphoserine modification. 85-87 (DES) is a substrate binding site. Residues His98, His123, and Asp124 each coordinate Fe cation. Substrate-binding positions include Lys127 and 141–142 (GD). Fe cation is bound by residues His194, His220, and Asp253. 220–221 (HS) is a binding site for substrate.

Belongs to the myo-inositol oxygenase family. Fe cation is required as a cofactor. Kidney specific.

It localises to the cytoplasm. It carries out the reaction myo-inositol + O2 = D-glucuronate + H2O + H(+). The protein operates within polyol metabolism; myo-inositol degradation into D-glucuronate; D-glucuronate from myo-inositol: step 1/1. In Homo sapiens (Human), this protein is Inositol oxygenase (MIOX).